Consider the following 831-residue polypeptide: Cation/H(+) symporter 13 (831 aa).

A run of 12 helical transmembrane segments spans residues 50-70 (YALP…RLIF), 89-109 (VVLG…FLPA), 112-132 (KIII…LLGL), 147-167 (ILIG…TIMF), 214-234 (LATH…LAFN), 250-270 (MIIG…VWLT), 282-302 (VVPF…GEAM), 303-323 (GVHA…GPPL), 334-354 (FASN…TNFF), 364-384 (VVMI…GTAA), 397-417 (LCLA…TIVW), and 430-450 (LVII…VYLY).

It belongs to the monovalent cation:proton antiporter 2 (CPA2) transporter (TC 2.A.37) family. CHX (TC 2.A.37.4) subfamily. As to expression, preferentially expressed in pollen before and after germination. Detected in pollen grains within anthers of the flower buds or in pollen on fully open flowers and on the stigma, and in pollen tubes growing in the style. Weakly expressed in roots.

The protein localises to the cell membrane. High-affinity potassium transporter that plays a role in K(+) acquisition. May operate as a K(+)/H(+) symporter. This Arabidopsis thaliana (Mouse-ear cress) protein is Cation/H(+) symporter 13 (CHX13).